The sequence spans 309 residues: Glutaminase (309 aa).

7 residues coordinate substrate: serine 65, asparagine 117, glutamate 162, asparagine 169, tyrosine 193, tyrosine 245, and valine 263.

The protein belongs to the glutaminase family. As to quaternary structure, homotetramer.

The catalysed reaction is L-glutamine + H2O = L-glutamate + NH4(+). The protein is Glutaminase of Bacillus mycoides (strain KBAB4) (Bacillus weihenstephanensis).